A 204-amino-acid chain; its full sequence is Ribonuclease HII (204 aa).

One can recognise an RNase H type-2 domain in the interval Glu-16–Lys-204. Residues Asp-22, Glu-23, and Asp-120 each contribute to the a divalent metal cation site.

This sequence belongs to the RNase HII family. It depends on Mn(2+) as a cofactor. The cofactor is Mg(2+).

The protein localises to the cytoplasm. It catalyses the reaction Endonucleolytic cleavage to 5'-phosphomonoester.. In terms of biological role, endonuclease that specifically degrades the RNA of RNA-DNA hybrids. This is Ribonuclease HII from Alkaliphilus metalliredigens (strain QYMF).